A 250-amino-acid polypeptide reads, in one-letter code: Probable E3 ubiquitin-protein ligase RHY1A (250 aa).

Over residues 1 to 10 (MTSASELFST) the composition is skewed to polar residues. The segment at 1-106 (MTSASELFST…ETQSSSFVNL (106 aa)) is disordered. The segment covering 29–47 (YRHHSHHHHRRHGVHHHNQ) has biased composition (basic residues). Residues 48 to 58 (RHDSDGCDPLR) show a composition bias toward basic and acidic residues. Positions 60 to 69 (PTPRLRRFFH) are enriched in basic residues. Positions 71 to 80 (PIQERSRPIR) are enriched in basic and acidic residues. The span at 91-102 (TDSTDTETQSSS) shows a compositional bias: low complexity. The RING-type; atypical zinc-finger motif lies at 203–244 (CSICLESFTKGDMLISLPCTHSFHSSCLNPWLRACGDCPCCR).

The enzyme catalyses S-ubiquitinyl-[E2 ubiquitin-conjugating enzyme]-L-cysteine + [acceptor protein]-L-lysine = [E2 ubiquitin-conjugating enzyme]-L-cysteine + N(6)-ubiquitinyl-[acceptor protein]-L-lysine.. The protein operates within protein modification; protein ubiquitination. Functionally, probable E3 ubiquitin-protein ligase that may possess E3 ubiquitin ligase activity in vitro. This Arabidopsis thaliana (Mouse-ear cress) protein is Probable E3 ubiquitin-protein ligase RHY1A.